The chain runs to 381 residues: Anhydro-N-acetylmuramic acid kinase (381 aa).

Residue 13–20 participates in ATP binding; that stretch reads GTSLDGID.

It belongs to the anhydro-N-acetylmuramic acid kinase family.

The enzyme catalyses 1,6-anhydro-N-acetyl-beta-muramate + ATP + H2O = N-acetyl-D-muramate 6-phosphate + ADP + H(+). The protein operates within amino-sugar metabolism; 1,6-anhydro-N-acetylmuramate degradation. It participates in cell wall biogenesis; peptidoglycan recycling. Its function is as follows. Catalyzes the specific phosphorylation of 1,6-anhydro-N-acetylmuramic acid (anhMurNAc) with the simultaneous cleavage of the 1,6-anhydro ring, generating MurNAc-6-P. Is required for the utilization of anhMurNAc either imported from the medium or derived from its own cell wall murein, and thus plays a role in cell wall recycling. This Francisella tularensis subsp. novicida (strain U112) protein is Anhydro-N-acetylmuramic acid kinase.